The chain runs to 239 residues: MRIERVDDTTVKLFITYSDIEARGFSREDLWTNRKRGEEFFWSMMDEINEEEDFVVEGPLWIQVHAFDKGVEVTISKSKNEDMMNMSDDDATDQFDEQVQELLAQTLEGEDQLEELFEQRTKEKEAQGSKRQKSSARKNTRTIIVKFNDLEDVINYAYHSNPITTEFEDLLYMVDGTYYYAVYFDSHVDQEVINDSYSQLLEFAYPTDRTEVYLNDYAKIIMSHNVTAQVRRYFPETTE.

The span at 118–128 (EQRTKEKEAQG) shows a compositional bias: basic and acidic residues. The segment at 118–137 (EQRTKEKEAQGSKRQKSSAR) is disordered.

This sequence belongs to the MecA family. In terms of assembly, homodimer.

Its function is as follows. Enables the recognition and targeting of unfolded and aggregated proteins to the ClpC protease or to other proteins involved in proteolysis. This is Adapter protein MecA from Staphylococcus aureus (strain COL).